The primary structure comprises 368 residues: Cytochrome b (368 aa).

A run of 4 helical transmembrane segments spans residues 32-52 (FGFL…TLAF), 76-98 (WEFR…IHMT), 112-132 (AWMS…LGYV), and 174-194 (FFVL…LHIF). Residues H82 and H96 each contribute to the heme b site. 2 residues coordinate heme b: H178 and H192. H197 is a binding site for a ubiquinone. 4 consecutive transmembrane segments (helical) span residues 219–239 (MLMT…LQAA), 285–305 (GLLV…IRAL), 323–343 (GWVI…SAIP), and 347–367 (YILY…VLCL).

Belongs to the cytochrome b family. In terms of assembly, the main subunits of complex b-c1 are: cytochrome b, cytochrome c1 and the Rieske protein. It depends on heme b as a cofactor.

The protein resides in the mitochondrion inner membrane. Its function is as follows. Component of the ubiquinol-cytochrome c reductase complex (complex III or cytochrome b-c1 complex) that is part of the mitochondrial respiratory chain. The b-c1 complex mediates electron transfer from ubiquinol to cytochrome c. Contributes to the generation of a proton gradient across the mitochondrial membrane that is then used for ATP synthesis. In Toxoplasma gondii, this protein is Cytochrome b (MT-CYB).